The primary structure comprises 381 residues: Sulfate/thiosulfate import ATP-binding protein CysA (381 aa).

In terms of domain architecture, ABC transporter spans 3–233; that stretch reads ILVYEVSKSL…PIDYFVGIFS (231 aa). 35–42 provides a ligand contact to ATP; sequence GPSGSGKS.

It belongs to the ABC transporter superfamily. Sulfate/tungstate importer (TC 3.A.1.6) family.

The protein localises to the plastid. Its subcellular location is the chloroplast. The catalysed reaction is sulfate(out) + ATP + H2O = sulfate(in) + ADP + phosphate + H(+). It catalyses the reaction thiosulfate(out) + ATP + H2O = thiosulfate(in) + ADP + phosphate + H(+). Functionally, part of the ABC transporter complex involved in sulfate/thiosulfate import. Responsible for energy coupling to the transport system. The protein is Sulfate/thiosulfate import ATP-binding protein CysA of Anthoceros angustus (Hornwort).